The sequence spans 169 residues: Putative phosphoesterase BLi01284/BL02661 (169 aa).

Catalysis depends on His34, which acts as the Proton donor. 2 consecutive short sequence motifs (HXTX) follow at residues 34-37 and 115-118; these read HLTL and HVTV. The active-site Proton acceptor is the His115.

This sequence belongs to the 2H phosphoesterase superfamily. YjcG family.

In Bacillus licheniformis (strain ATCC 14580 / DSM 13 / JCM 2505 / CCUG 7422 / NBRC 12200 / NCIMB 9375 / NCTC 10341 / NRRL NRS-1264 / Gibson 46), this protein is Putative phosphoesterase BLi01284/BL02661.